A 449-amino-acid chain; its full sequence is Probable glycosyltransferase 5 (449 aa).

A compositionally biased stretch (basic and acidic residues) spans 1–14 (MMEKHGGKVTSDRR). Residues 1-24 (MMEKHGGKVTSDRRAGRRQHGQRC) form a disordered region. At 1–28 (MMEKHGGKVTSDRRAGRRQHGQRCSASD) the chain is on the cytoplasmic side. Residues 29–49 (AAPLVVVVILIVGALFLILGP) form a helical; Signal-anchor for type II membrane protein membrane-spanning segment. Over 50–449 (TGSSSFTVPR…HPTFRAARPT (400 aa)) the chain is Lumenal. The disordered stretch occupies residues 74 to 109 (APPPPPPPAQMQAGANASSEEDSGLPPPRQLTDPPY). Asn-89, Asn-413, and Asn-422 each carry an N-linked (GlcNAc...) asparagine glycan.

This sequence belongs to the glycosyltransferase 34 family.

It is found in the golgi apparatus membrane. Its function is as follows. Probable glycosyltransferase that may be involved in the biosynthesis of xyloglucan. The protein is Probable glycosyltransferase 5 of Oryza sativa subsp. indica (Rice).